We begin with the raw amino-acid sequence, 488 residues long: Envelope glycoprotein gp62 (488 aa).

The N-terminal stretch at 1-20 (MGKFLATLILFFQFCPLIFG) is a signal peptide. Residues 21–442 (DYSPSCCTLT…LGLSQWAREA (422 aa)) lie on the Extracellular side of the membrane. N-linked (GlcNAc...) asparagine; by host glycans are attached at residues asparagine 140 and asparagine 222. Residues 225–228 (CIVC) carry the CXXC motif. N-linked (GlcNAc...) asparagine; by host glycans are attached at residues asparagine 244 and asparagine 272. Residues 313–333 (AVPVAVWLVSALAMGAGVAGG) form a fusion peptide region. Coiled coils occupy residues 341 to 387 (ASGK…LLFW) and 397 to 429 (QEQC…GWGL). Residues 376–392 (AQNRRGLDLLFWEQGGL) are immunosuppression. An intrachain disulfide couples cysteine 393 to cysteine 400. The N-linked (GlcNAc...) asparagine; by host glycan is linked to asparagine 404. A helical transmembrane segment spans residues 443–463 (LQTGITLVALLLLVILAGPCI). A lipid anchor (S-palmitoyl cysteine; by host) is attached at cysteine 462. Over 464-488 (LRQLRHLPSRVRYPHYSLIKPESSL) the chain is Cytoplasmic.

As to quaternary structure, the mature envelope protein (Env) consists of a trimer of SU-TM heterodimers attached by non-covalent interactions or by a labile interchain disulfide bond. In terms of processing, specific enzymatic cleavages in vivo yield mature proteins. Envelope glycoproteins are synthesized as an inactive precursor that is N-glycosylated and processed likely by host cell furin or by a furin-like protease in the Golgi to yield the mature SU and TM proteins. The cleavage site between SU and TM requires the minimal sequence [KR]-X-[KR]-R. Post-translationally, the transmembrane protein is palmitoylated.

The protein resides in the virion membrane. Its subcellular location is the host cell membrane. In terms of biological role, the surface protein (SU) attaches the virus to the host cell by binding to its receptor. This interaction triggers the refolding of the transmembrane protein (TM) and is thought to activate its fusogenic potential by unmasking its fusion peptide. Fusion occurs at the host cell plasma membrane. Functionally, the transmembrane protein (TM) acts as a class I viral fusion protein. Under the current model, the protein has at least 3 conformational states: pre-fusion native state, pre-hairpin intermediate state, and post-fusion hairpin state. During viral and target cell membrane fusion, the coiled coil regions (heptad repeats) assume a trimer-of-hairpins structure, positioning the fusion peptide in close proximity to the C-terminal region of the ectodomain. The formation of this structure appears to drive apposition and subsequent fusion of viral and target cell membranes. Membranes fusion leads to delivery of the nucleocapsid into the cytoplasm. The protein is Envelope glycoprotein gp62 (env) of Homo sapiens (Human).